The primary structure comprises 449 residues: MELETHLSKYFTLAFTHKSMSLEMREKLAINSSTTLKEFLQTIKTHCPNIKECMVLSTCNRFEIYASLKHGANTNEQKNALLKILAQNKKMSVSDLEKCVLMNTDESAVHHVFSVCSSLDSLVVGETQITGQMKNAYKFAFEEKFCSKDLTRLLHFAFKCAAKVRNLTGISKQGVSISSVAVKEALNIFEKERIKDKKALVIGLGEMAQLVIKHLLNKQFEVLILGRNAAKFEDFVKELEEPKKVSFQNIENLNAYINEYELLFCATSSPHFIVQNRMLKETIFRRFWFDLAVPRNIEKPVLDNIFLYSVDDLEPMVRENVENRQESRTKAYEIVGLATMEFYQWIQSLEVEPVIKDLRELARISAQKELQKALKKRYVPKEYESNIEKILHNAFNTFLHHPTIALKKNAQKEESDVLVGAIKNLFNLDKSTTCHAQNLNLYKCEYYEE.

Substrate is bound by residues 58 to 61 (TCNR), S121, 126 to 128 (ETQ), and Q132. C59 functions as the Nucleophile in the catalytic mechanism. NADP(+) is bound at residue 203–208 (GLGEMA).

Belongs to the glutamyl-tRNA reductase family. Homodimer.

The catalysed reaction is (S)-4-amino-5-oxopentanoate + tRNA(Glu) + NADP(+) = L-glutamyl-tRNA(Glu) + NADPH + H(+). It participates in porphyrin-containing compound metabolism; protoporphyrin-IX biosynthesis; 5-aminolevulinate from L-glutamyl-tRNA(Glu): step 1/2. Catalyzes the NADPH-dependent reduction of glutamyl-tRNA(Glu) to glutamate 1-semialdehyde (GSA). In Helicobacter pylori (strain P12), this protein is Glutamyl-tRNA reductase.